Consider the following 285-residue polypeptide: MRMIIVSGRSGSGKSTALDVLEDNGFYCVDNLPAGLLPELAERALINTELAEPLLAVSIDARNLPSHLTRFPQMLDEVRSRNIQCDVLYLDADEATLLKRFSETRRRHPLSTADRSLAEAIRDETTLLGPIIDLADLKINTTHLNLYQLRDALKLRLLNKPEPGTAFLIESFGFKRGMPVDADLVFDVRCLPNPYWKPELRDHSGLEQPVIDYLSVQPDVEEMFQDIFAYLNKWLPRFAASNRSYVTIAIGCTGGHHRSVYLTERLGQVLQQSLKNVQVRHRDLS.

Position 8–15 (8–15 (GRSGSGKS)) interacts with ATP. 60 to 63 (DARN) serves as a coordination point for GTP.

This sequence belongs to the RapZ-like family.

Displays ATPase and GTPase activities. This is Nucleotide-binding protein PSPPH_4154 from Pseudomonas savastanoi pv. phaseolicola (strain 1448A / Race 6) (Pseudomonas syringae pv. phaseolicola (strain 1448A / Race 6)).